The primary structure comprises 27 residues: GFKDWMKKAGSWLKKKGPALIKAAMQE.

This sequence belongs to the ponericin-G family. Expressed by the venom gland.

It is found in the secreted. In terms of biological role, has activity against some Gram-positive bacteria and S.cerevisiae. Has a non-hemolytic activity. The polypeptide is U1-poneritoxin-Na3a (Neoponera apicalis (Ant)).